Reading from the N-terminus, the 300-residue chain is GTPase Era (300 aa).

An Era-type G domain is found at 8–176 (RCGYVAIVGR…EAQIAKHLPE (169 aa)). The G1 stretch occupies residues 16–23 (GRPNVGKS). 16–23 (GRPNVGKS) contributes to the GTP binding site. The tract at residues 42–46 (QTTRH) is G2. The tract at residues 63-66 (DTPG) is G3. Residues 63–67 (DTPGM) and 125–128 (NKTD) contribute to the GTP site. The segment at 125–128 (NKTD) is G4. The segment at 155-157 (ISA) is G5. The region spanning 199-283 (VREKIMRQLG…MLNLWVKVKG (85 aa)) is the KH type-2 domain.

It belongs to the TRAFAC class TrmE-Era-EngA-EngB-Septin-like GTPase superfamily. Era GTPase family. In terms of assembly, monomer.

It localises to the cytoplasm. The protein resides in the cell inner membrane. An essential GTPase that binds both GDP and GTP, with rapid nucleotide exchange. Plays a role in 16S rRNA processing and 30S ribosomal subunit biogenesis and possibly also in cell cycle regulation and energy metabolism. The polypeptide is GTPase Era (Pseudomonas entomophila (strain L48)).